An 810-amino-acid polypeptide reads, in one-letter code: Coiled-coil domain-containing protein 15 (810 aa).

Coiled coils occupy residues 65-89, 160-189, and 638-669; these read VVEE…RQVR, DGEN…SFKT, and MDIE…EQQR.

Interacts with POC5, POC1B, CETN2 and FAM161A.

The protein localises to the cytoplasm. It localises to the cytoskeleton. It is found in the microtubule organizing center. Its subcellular location is the centrosome. The protein resides in the centriole. The protein localises to the centriolar satellite. Plays an important role in primary cilium assembly, maintenance, and length regulation. Interacts with centriole inner scaffold proteins to promote proper centriole size and integrity and assembly of functional cilia. Required for the recruitment of both the inner scaffold protein POC1B and the distal SFI1/CETN2 complex to centrioles. This chain is Coiled-coil domain-containing protein 15 (Ccdc15), found in Mus musculus (Mouse).